Reading from the N-terminus, the 344-residue chain is Phosphoribosylformylglycinamidine cyclo-ligase (344 aa).

It belongs to the AIR synthase family.

The protein localises to the cytoplasm. It catalyses the reaction 2-formamido-N(1)-(5-O-phospho-beta-D-ribosyl)acetamidine + ATP = 5-amino-1-(5-phospho-beta-D-ribosyl)imidazole + ADP + phosphate + H(+). Its pathway is purine metabolism; IMP biosynthesis via de novo pathway; 5-amino-1-(5-phospho-D-ribosyl)imidazole from N(2)-formyl-N(1)-(5-phospho-D-ribosyl)glycinamide: step 2/2. This chain is Phosphoribosylformylglycinamidine cyclo-ligase, found in Haemophilus influenzae (strain PittGG).